Reading from the N-terminus, the 136-residue chain is Histone H3.2 (136 aa).

The tract at residues 1-43 (MARTKQTARKSTGGKAPRKQLATKAARKSAPATGGVKKPHRFR) is disordered. The residue at position 5 (Lys-5) is an N6-methylated lysine. Lys-10 is subject to N6-acetyllysine; alternate. N6-methylated lysine; alternate is present on Lys-10. Ser-11 carries the post-translational modification Phosphoserine. A Phosphothreonine modification is found at Thr-12. The residue at position 15 (Lys-15) is an N6-acetyllysine. Lys-19 and Lys-24 each carry N6-acetyllysine; alternate. N6-methylated lysine; alternate occurs at positions 19 and 24. Lys-28 is modified (N6-methylated lysine). Position 29 is a phosphoserine (Ser-29). Position 37 is an N6-methylated lysine (Lys-37).

The protein belongs to the histone H3 family. As to quaternary structure, the nucleosome is a histone octamer containing two molecules each of H2A, H2B, H3 and H4 assembled in one H3-H4 heterotetramer and two H2A-H2B heterodimers. The octamer wraps approximately 147 bp of DNA. Post-translationally, acetylation is generally linked to gene activation. Can be acetylated to form H3K9ac, H3K14ac, H3K18ac and H3K23ac. H3K9ac could compete with H3K9me and prevent gene silencing. H3K9ac is restricted to euchromatin. Methylated to form mainly H3K4me, H3K9me, H3K18me, H3K23me, H3K27me and H3K36me. H3K4me1/2/3, H3K9me3, H3K27me3 and H3K36me1/2/3 are typical marks for euchromatin, whereas heterochromatic chromocenters are enriched in H3K9me1/2 and H3K27me1/2. H2BK143ub1 is probably prerequisite for H3K4me. In terms of processing, can be phosphorylated to form H3S10ph, H3T11ph and H3S28ph.

It localises to the nucleus. The protein resides in the chromosome. Functionally, core component of nucleosome. Nucleosomes wrap and compact DNA into chromatin, limiting DNA accessibility to the cellular machineries which require DNA as a template. Histones thereby play a central role in transcription regulation, DNA repair, DNA replication and chromosomal stability. DNA accessibility is regulated via a complex set of post-translational modifications of histones, also called histone code, and nucleosome remodeling. This chain is Histone H3.2, found in Triticum aestivum (Wheat).